The chain runs to 241 residues: Ribosomal RNA small subunit methyltransferase G (241 aa).

Residues Gly79, Phe84, 130–131 (AE), and Arg150 each bind S-adenosyl-L-methionine.

The protein belongs to the methyltransferase superfamily. RNA methyltransferase RsmG family.

Its subcellular location is the cytoplasm. In terms of biological role, specifically methylates the N7 position of a guanine in 16S rRNA. The polypeptide is Ribosomal RNA small subunit methyltransferase G (Limosilactobacillus reuteri (strain DSM 20016) (Lactobacillus reuteri)).